Reading from the N-terminus, the 540-residue chain is Acrosin-binding protein (540 aa).

A signal peptide spans 1-24 (MKLAASFLLMLLEVLLLPETPLSA). Residues 25-104 (EEALASTPGS…ASWFESFCQF (80 aa)) form a pro-ACR binding region. A propeptide spans 25–272 (EEALASTPGS…NPSFFTPRVR (248 aa)) (removed in mature form). A disordered region spans residues 181–266 (SLSLGGKEQQ…SKSLSSNPSF (86 aa)). The segment covering 195–213 (LGLEQQHKQEQIQEHKLEE) has biased composition (basic and acidic residues). Residues 214 to 241 (AQEQEEQEEEEEEEEAKQEEGQGTEEGL) show a composition bias toward acidic residues. The span at 256–266 (QSKSLSSNPSF) shows a compositional bias: polar residues. The interval 316–424 (LPHTETLMVL…NQAKIPEKGR (109 aa)) is pro-ACR binding.

As to quaternary structure, binds pro-ACR. Does not bind the mature form of ACR. In terms of assembly, binds pro-ACR. Does not bind mature form of ACR. The N-terminus is blocked. Post-translationally, phosphorylated on Tyr residues in capacitated sperm. In terms of processing, synthesized as a 60-kDa precursor, the 32-kDa mature form is post-translationally produced by the removal of the N-terminal half of the precursor during sperm maturation in the testis and/or epididymis.

The protein localises to the cytoplasmic vesicle. Its subcellular location is the secretory vesicle. The protein resides in the acrosome. Functionally, acrosomal protein that maintains proacrosin (pro-ACR) as an enzymatically inactive zymogen in the acrosome. Involved also in the acrosome formation. In terms of biological role, maintains pro-ACR as an enzymatically inactive zymogen in the acrosome until acrosomal exocytosis. Partially also contributes to the assembly of acrosomal proteins to form an acrosomal granule. Rodent specific isoform that participates in the formation of the acrosomal granule into the center of the acrosomal vesicle during early spermiogenesis. In the fertilization process promotes ACR release from the acrosome during acrosomal exocytosis. The protein is Acrosin-binding protein of Rattus norvegicus (Rat).